We begin with the raw amino-acid sequence, 185 residues long: HTH-type transcriptional repressor OpcR (185 aa).

Positions 49–73 (LSELSEATGMSKTRMSQVVREMIDA) form a DNA-binding region, H-T-H motif.

It belongs to the GbsR family.

Is not choline-responsive. Its function is as follows. Negatively regulates the transcription of the opuC operon. In the absence of GbsR, is also a negative regulator of the opuB operon. Binds to an inverted repeat in the promoter region of the operons. The sequence is that of HTH-type transcriptional repressor OpcR (opcR) from Bacillus subtilis (strain 168).